The primary structure comprises 220 residues: Translation initiation factor 6 (220 aa).

The protein belongs to the eIF-6 family.

In terms of biological role, binds to the 50S ribosomal subunit and prevents its association with the 30S ribosomal subunit to form the 70S initiation complex. This chain is Translation initiation factor 6, found in Methanoculleus marisnigri (strain ATCC 35101 / DSM 1498 / JR1).